The following is a 137-amino-acid chain: Large ribosomal subunit protein uL16 (137 aa).

Residues 1–17 are compositionally biased toward basic residues; that stretch reads MLSPKRVKFRKRQRGRL. The segment at 1 to 24 is disordered; the sequence is MLSPKRVKFRKRQRGRLKGTDERG.

It belongs to the universal ribosomal protein uL16 family. As to quaternary structure, part of the 50S ribosomal subunit.

Functionally, binds 23S rRNA and is also seen to make contacts with the A and possibly P site tRNAs. This is Large ribosomal subunit protein uL16 from Leptospira borgpetersenii serovar Hardjo-bovis (strain JB197).